The following is a 146-amino-acid chain: Snaclec coagulation factor X-activating enzyme light chain 1 (146 aa).

The N-terminal stretch at 1-23 (MGRFISVSFGCLVVFLSLSGTEA) is a signal peptide. The cysteines at positions 27 and 38 are disulfide-linked. The region spanning 34–145 (YEQHCYKGFN…CNFIAPVVCK (112 aa)) is the C-type lectin domain. The N-linked (GlcNAc...) (complex) asparagine glycan is linked to asparagine 47. 2 disulfide bridges follow: cysteine 55–cysteine 144 and cysteine 121–cysteine 136.

This sequence belongs to the snaclec family. As to quaternary structure, heterotrimer; disulfide-linked. The heterotrimer consists of 1 heavy chain (a metalloproteinase) and 2 light chains: LC1 and LC2. Post-translationally, N-glycosylated; probably required for conformation. Removal of easily accessible sugars does not change its functional capacity, but removal of the core sugars with N-glycanase causes a virtually complete loss of enzyme activity, apparently as a result of major conformational changes in the molecule. Not O-glycosylated. As to expression, expressed by the venom gland.

It localises to the secreted. Its function is as follows. Regulatory subunit of the blood coagulation factor X- and IX-activating enzyme. The enzyme activates coagulation factor X (F10) by cleaving the Arg-Ile bond and is also able to activate coagulation factor IX (F9) and protein S (PROS1) by specific cleavage of Arg-Ile and Arg-Val bonds. May serve as an exosite by which the enzyme recognizes and binds to the Gla domain of factor X (F10) and factor IX (F9) in a calcium-dependent manner. This is Snaclec coagulation factor X-activating enzyme light chain 1 (LC1) from Daboia siamensis (Eastern Russel's viper).